The chain runs to 342 residues: UDP-3-O-acylglucosamine N-acyltransferase (342 aa).

His-253 acts as the Proton acceptor in catalysis.

It belongs to the transferase hexapeptide repeat family. LpxD subfamily. Homotrimer.

It catalyses the reaction a UDP-3-O-[(3R)-3-hydroxyacyl]-alpha-D-glucosamine + a (3R)-hydroxyacyl-[ACP] = a UDP-2-N,3-O-bis[(3R)-3-hydroxyacyl]-alpha-D-glucosamine + holo-[ACP] + H(+). It functions in the pathway bacterial outer membrane biogenesis; LPS lipid A biosynthesis. Its function is as follows. Catalyzes the N-acylation of UDP-3-O-acylglucosamine using 3-hydroxyacyl-ACP as the acyl donor. Is involved in the biosynthesis of lipid A, a phosphorylated glycolipid that anchors the lipopolysaccharide to the outer membrane of the cell. The sequence is that of UDP-3-O-acylglucosamine N-acyltransferase from Rickettsia bellii (strain RML369-C).